Consider the following 98-residue polypeptide: uncharacterized protein (98 aa).

The region spanning 37–91 (LITSRQQLGISQKQLETLSGVKQPMIARIEKGQTNPQLETLLKLLAPLGKTLSIV) is the HTH cro/C1-type domain. The H-T-H motif DNA-binding region spans 48–67 (QKQLETLSGVKQPMIARIEK).

This is an uncharacterized protein from Haemophilus influenzae (strain ATCC 51907 / DSM 11121 / KW20 / Rd).